The following is a 280-amino-acid chain: Transcription factor MYB46 (280 aa).

2 consecutive HTH myb-type domains span residues 15-67 and 68-122; these read VKKM…INYL and RPDL…KKRL. 2 DNA-binding regions (H-T-H motif) span residues 43-67 and 95-118; these read WSDV…INYL and WSQI…NSTI. The disordered stretch occupies residues 129–150; the sequence is SNLINNSSSSPNTASDSSSNSA.

As to expression, expressed at low levels in stems and siliques, specifically in xylem.

Its subcellular location is the nucleus. In terms of biological role, transcription activator. Involved in the regulation of secondary wall biosynthesis in fibers and vessels. Transcription activator of the mannan synthase CSLA9 that recognizes and binds to the DNA consensus sequence 5'-[AG][GT]T[AT]GGT[GA]-3' cis-regulatory element of CSLA9 promoter. Transcription factor that acts as a molecular switch in the NAC012/SND1-mediated transcriptional network regulating secondary wall biosynthesis. Is directly activated by NAC012/SND1. Functions redundantly with MYB83 in the transcriptional regulatory cascade leading to secondary wall formation in fibers and vessels. Transcription activator that binds to the DNA consensus sequence 5'-ACC[AT]A[AC][TC]-3', designated as the secondary wall MYB-responsive element (SMRE). Regulates directly numerous transcription factors and a number of genes involved in secondary wall biosynthesis that contain SMRE elements in their promoters. Is an obligate component of the transcriptional regulatory complex toward the commitment of secondary wall cellulose synthesis. Is required for functional expression of the three secondary wall CESA genes, CESA4, CESA7 and CESA8. In Arabidopsis thaliana (Mouse-ear cress), this protein is Transcription factor MYB46.